A 475-amino-acid polypeptide reads, in one-letter code: Ribulose bisphosphate carboxylase large chain (475 aa).

A propeptide spanning residues 1 to 2 is cleaved from the precursor; it reads MS. Pro3 bears the N-acetylproline mark. Lys14 bears the N6,N6,N6-trimethyllysine mark. Residues Asn123 and Thr173 each contribute to the substrate site. Residue Lys175 is the Proton acceptor of the active site. Lys177 is a substrate binding site. Residues Lys201, Asp203, and Glu204 each contribute to the Mg(2+) site. Lys201 bears the N6-carboxylysine mark. His294 serves as the catalytic Proton acceptor. Residues Arg295, His327, and Ser379 each contribute to the substrate site.

This sequence belongs to the RuBisCO large chain family. Type I subfamily. As to quaternary structure, heterohexadecamer of 8 large chains and 8 small chains; disulfide-linked. The disulfide link is formed within the large subunit homodimers. Requires Mg(2+) as cofactor. Post-translationally, the disulfide bond which can form in the large chain dimeric partners within the hexadecamer appears to be associated with oxidative stress and protein turnover.

It localises to the plastid. Its subcellular location is the chloroplast. The enzyme catalyses 2 (2R)-3-phosphoglycerate + 2 H(+) = D-ribulose 1,5-bisphosphate + CO2 + H2O. It carries out the reaction D-ribulose 1,5-bisphosphate + O2 = 2-phosphoglycolate + (2R)-3-phosphoglycerate + 2 H(+). In terms of biological role, ruBisCO catalyzes two reactions: the carboxylation of D-ribulose 1,5-bisphosphate, the primary event in carbon dioxide fixation, as well as the oxidative fragmentation of the pentose substrate in the photorespiration process. Both reactions occur simultaneously and in competition at the same active site. This Cucumis sativus (Cucumber) protein is Ribulose bisphosphate carboxylase large chain (rbcL).